Consider the following 318-residue polypeptide: Aspartate carbamoyltransferase catalytic subunit (318 aa).

Arginine 67 and threonine 68 together coordinate carbamoyl phosphate. Residue lysine 95 coordinates L-aspartate. 3 residues coordinate carbamoyl phosphate: arginine 117, histidine 145, and glutamine 148. 2 residues coordinate L-aspartate: arginine 178 and arginine 236. 2 residues coordinate carbamoyl phosphate: glycine 277 and proline 278.

It belongs to the aspartate/ornithine carbamoyltransferase superfamily. ATCase family. Heterododecamer (2C3:3R2) of six catalytic PyrB chains organized as two trimers (C3), and six regulatory PyrI chains organized as three dimers (R2).

The catalysed reaction is carbamoyl phosphate + L-aspartate = N-carbamoyl-L-aspartate + phosphate + H(+). The protein operates within pyrimidine metabolism; UMP biosynthesis via de novo pathway; (S)-dihydroorotate from bicarbonate: step 2/3. Catalyzes the condensation of carbamoyl phosphate and aspartate to form carbamoyl aspartate and inorganic phosphate, the committed step in the de novo pyrimidine nucleotide biosynthesis pathway. This chain is Aspartate carbamoyltransferase catalytic subunit, found in Roseiflexus castenholzii (strain DSM 13941 / HLO8).